Reading from the N-terminus, the 496-residue chain is Probable cytosol aminopeptidase (496 aa).

Positions 251 and 256 each coordinate Mn(2+). Residue Lys263 is part of the active site. 3 residues coordinate Mn(2+): Asp274, Asp333, and Glu335. The active site involves Arg337.

It belongs to the peptidase M17 family. The cofactor is Mn(2+).

The protein resides in the cytoplasm. The catalysed reaction is Release of an N-terminal amino acid, Xaa-|-Yaa-, in which Xaa is preferably Leu, but may be other amino acids including Pro although not Arg or Lys, and Yaa may be Pro. Amino acid amides and methyl esters are also readily hydrolyzed, but rates on arylamides are exceedingly low.. It catalyses the reaction Release of an N-terminal amino acid, preferentially leucine, but not glutamic or aspartic acids.. In terms of biological role, presumably involved in the processing and regular turnover of intracellular proteins. Catalyzes the removal of unsubstituted N-terminal amino acids from various peptides. This chain is Probable cytosol aminopeptidase, found in Acidovorax ebreus (strain TPSY) (Diaphorobacter sp. (strain TPSY)).